We begin with the raw amino-acid sequence, 672 residues long: Probable copper-transporting P-type ATPase B (672 aa).

Basic and acidic residues predominate over residues 1 to 17 (MEHHSHQEHENHTSHGN). Residues 1-22 (MEHHSHQEHENHTSHGNHEHHH) are disordered. The next 6 helical transmembrane spans lie at 30-50 (FFIS…MGVK), 55-75 (ISFT…FFYG), 93-113 (GMMT…LYAF), 125-145 (TMDF…GHWI), 282-302 (GYLF…WMLI), and 313-333 (LVTV…PLVT). Aspartate 365 acts as the 4-aspartylphosphate intermediate in catalysis. 2 residues coordinate Mg(2+): aspartate 563 and aspartate 567. 2 consecutive transmembrane segments (helical) span residues 621–643 (LWWG…ASIG) and 647–669 (SPAV…AFTL).

Belongs to the cation transport ATPase (P-type) (TC 3.A.3) family. Type IB subfamily.

It localises to the cell membrane. The enzyme catalyses Cu(+)(in) + ATP + H2O = Cu(+)(out) + ADP + phosphate + H(+). Its function is as follows. Involved in copper transport. This Staphylococcus aureus protein is Probable copper-transporting P-type ATPase B (copB).